We begin with the raw amino-acid sequence, 312 residues long: Malate dehydrogenase (312 aa).

NAD(+)-binding positions include 7-13 and Asp34; that span reads GAAGGIG. Substrate is bound by residues Arg81 and Arg87. Residues Asn94 and 117–119 each bind NAD(+); that span reads ITN. 2 residues coordinate substrate: Asn119 and Arg153. His177 functions as the Proton acceptor in the catalytic mechanism. Met227 contacts NAD(+).

This sequence belongs to the LDH/MDH superfamily. MDH type 1 family. Homodimer.

It carries out the reaction (S)-malate + NAD(+) = oxaloacetate + NADH + H(+). In terms of biological role, catalyzes the reversible oxidation of malate to oxaloacetate. This chain is Malate dehydrogenase, found in Escherichia coli O7:K1 (strain IAI39 / ExPEC).